A 263-amino-acid chain; its full sequence is Phosphoinositide-3-kinase-interacting protein 1 (263 aa).

Positions 1–18 are cleaved as a signal peptide; sequence MFGRLYFMLLLSVGLVDC. At 19 to 163 the chain is on the extracellular side; sequence LSVVKDCITN…SGPKKKKDLG (145 aa). One can recognise a Kringle domain in the interval 24-99; that stretch reads DCITNNGEDY…KKEACDIRIC (76 aa). 3 disulfides stabilise this stretch: Cys25–Cys99, Cys46–Cys80, and Cys69–Cys94. A glycan (N-linked (GlcNAc...) asparagine) is linked at Asn103. A helical membrane pass occupies residues 164–184; sequence TLGYVLAVFMMAIIILLGGGI. Over 185–263 the chain is Cytoplasmic; that stretch reads TMGYFYKRGR…LMGSAGTPGA (79 aa). Positions 239 to 263 are disordered; sequence NNQTPTQEPVEGADPLMGSAGTPGA.

It localises to the cell membrane. Its function is as follows. Negative regulator of hepatic phosphatidylinositol 3-kinase (PI3K) activity. This chain is Phosphoinositide-3-kinase-interacting protein 1 (pik3ip1), found in Danio rerio (Zebrafish).